The chain runs to 426 residues: Trigger factor (426 aa).

The 81-residue stretch at 160–240 (GDTVIGDVTK…IKEVKHLELP (81 aa)) folds into the PPIase FKBP-type domain.

It belongs to the FKBP-type PPIase family. Tig subfamily.

It is found in the cytoplasm. The enzyme catalyses [protein]-peptidylproline (omega=180) = [protein]-peptidylproline (omega=0). Its function is as follows. Involved in protein export. Acts as a chaperone by maintaining the newly synthesized protein in an open conformation. Functions as a peptidyl-prolyl cis-trans isomerase. In Chlorobaculum tepidum (strain ATCC 49652 / DSM 12025 / NBRC 103806 / TLS) (Chlorobium tepidum), this protein is Trigger factor.